A 301-amino-acid polypeptide reads, in one-letter code: Protoheme IX farnesyltransferase (301 aa).

Helical transmembrane passes span 29-49 (VVAL…PGVV), 51-71 (IVPL…AAAF), 96-118 (VSIA…VLYV), 123-143 (LTAW…TAYL), 151-171 (IVVG…AVTG), 177-197 (ALLL…ALAI), 223-243 (CIFL…LVGM), 244-264 (CGPV…YKAW), and 281-301 (FSIY…YLWL).

It belongs to the UbiA prenyltransferase family. Protoheme IX farnesyltransferase subfamily.

It is found in the cell inner membrane. The enzyme catalyses heme b + (2E,6E)-farnesyl diphosphate + H2O = Fe(II)-heme o + diphosphate. The protein operates within porphyrin-containing compound metabolism; heme O biosynthesis; heme O from protoheme: step 1/1. Converts heme B (protoheme IX) to heme O by substitution of the vinyl group on carbon 2 of heme B porphyrin ring with a hydroxyethyl farnesyl side group. This is Protoheme IX farnesyltransferase from Shewanella halifaxensis (strain HAW-EB4).